The chain runs to 154 residues: Cytochrome c-type biogenesis protein CcmE (154 aa).

Residues 1–7 are Cytoplasmic-facing; it reads MKPRQKR. A helical; Signal-anchor for type II membrane protein membrane pass occupies residues 8–28; the sequence is LVLIVGIVAAVGVAAALVLNA. At 29–154 the chain is on the periplasmic side; that stretch reads FQSNLVFFYS…GETVVKETRP (126 aa). Positions 121 and 125 each coordinate heme. The segment at 131-154 is disordered; it reads AEALQRAGASNQKLGETVVKETRP.

Belongs to the CcmE/CycJ family.

It is found in the cell inner membrane. Heme chaperone required for the biogenesis of c-type cytochromes. Transiently binds heme delivered by CcmC and transfers the heme to apo-cytochromes in a process facilitated by CcmF and CcmH. This chain is Cytochrome c-type biogenesis protein CcmE, found in Methylibium petroleiphilum (strain ATCC BAA-1232 / LMG 22953 / PM1).